Here is a 339-residue protein sequence, read N- to C-terminus: Cyclin-D1-1 (339 aa).

This sequence belongs to the cyclin family. Cyclin D subfamily. As to quaternary structure, interacts with CDKA-1 and KRP6/ICK4. Expressed in roots, leaves and flowers.

May activate cell cycle in the root apical meristem (RAM) and promote embryonic root (radicle) protrusion. In Arabidopsis thaliana (Mouse-ear cress), this protein is Cyclin-D1-1 (CYCD1-1).